The primary structure comprises 226 residues: ATP-dependent dethiobiotin synthetase BioD (226 aa).

12-17 is an ATP binding site; the sequence is GIGKTV. Residue T16 participates in Mg(2+) binding. The active site involves K37. T41 provides a ligand contact to substrate. Residues D49, 108–111, and 197–199 contribute to the ATP site; these read EGAG and PAG. 2 residues coordinate Mg(2+): D49 and E108.

Belongs to the dethiobiotin synthetase family. In terms of assembly, homodimer. Mg(2+) serves as cofactor.

It localises to the cytoplasm. It catalyses the reaction (7R,8S)-7,8-diammoniononanoate + CO2 + ATP = (4R,5S)-dethiobiotin + ADP + phosphate + 3 H(+). Its pathway is cofactor biosynthesis; biotin biosynthesis; biotin from 7,8-diaminononanoate: step 1/2. Catalyzes a mechanistically unusual reaction, the ATP-dependent insertion of CO2 between the N7 and N8 nitrogen atoms of 7,8-diaminopelargonic acid (DAPA, also called 7,8-diammoniononanoate) to form a ureido ring. The sequence is that of ATP-dependent dethiobiotin synthetase BioD from Mycolicibacterium vanbaalenii (strain DSM 7251 / JCM 13017 / BCRC 16820 / KCTC 9966 / NRRL B-24157 / PYR-1) (Mycobacterium vanbaalenii).